We begin with the raw amino-acid sequence, 289 residues long: ATP synthase gamma chain (289 aa).

The protein belongs to the ATPase gamma chain family. F-type ATPases have 2 components, CF(1) - the catalytic core - and CF(0) - the membrane proton channel. CF(1) has five subunits: alpha(3), beta(3), gamma(1), delta(1), epsilon(1). CF(0) has three main subunits: a, b and c.

Its subcellular location is the cell inner membrane. Functionally, produces ATP from ADP in the presence of a proton gradient across the membrane. The gamma chain is believed to be important in regulating ATPase activity and the flow of protons through the CF(0) complex. The chain is ATP synthase gamma chain from Haemophilus influenzae (strain PittGG).